Reading from the N-terminus, the 424-residue chain is Steryl acetyl hydrolase 1 (424 aa).

The residue at position 2 (Ala2) is an N-acetylalanine. The Cytoplasmic segment spans residues 2-45 (AANSGLDSKVEYYRLQENEIISAVSSEDADQNDAGFRLSTIHLH). The helical; Signal-anchor for type II membrane protein transmembrane segment at 46–66 (LFHGLKFAALLFTVVPVFIIL) threads the bilayer. Over 67–424 (DSMKIIFQRK…IARILEFMQS (358 aa)) the chain is Lumenal. The N-linked (GlcNAc...) asparagine glycan is linked to Asn85. The short motif at 176 to 178 (HGG) is the Involved in the stabilization of the negatively charged intermediate by the formation of the oxyanion hole element. Ser250 is an active-site residue. An N-linked (GlcNAc...) asparagine glycan is attached at Asn283. His395 is a catalytic residue. Asn401 carries N-linked (GlcNAc...) asparagine glycosylation.

This sequence belongs to the 'GDXG' lipolytic enzyme family.

It is found in the endoplasmic reticulum membrane. Functionally, required for the deacetylation of acetylated sterols. Involved in the resistance to eugenol and pregnenolone toxicity. This Saccharomyces cerevisiae (strain ATCC 204508 / S288c) (Baker's yeast) protein is Steryl acetyl hydrolase 1 (SAY1).